The sequence spans 38 residues: Large ribosomal subunit protein bL36 (38 aa).

The protein belongs to the bacterial ribosomal protein bL36 family.

The polypeptide is Large ribosomal subunit protein bL36 (Anaeromyxobacter dehalogenans (strain 2CP-1 / ATCC BAA-258)).